A 216-amino-acid polypeptide reads, in one-letter code: 3-keto-L-gulonate-6-phosphate decarboxylase UlaD (216 aa).

Asp-11 contacts substrate. Positions 33 and 62 each coordinate Mg(2+). Arg-192 provides a ligand contact to substrate.

It belongs to the HPS/KGPDC family. KGPDC subfamily. In terms of assembly, homodimer. Mg(2+) serves as cofactor.

The enzyme catalyses 3-dehydro-L-gulonate 6-phosphate + H(+) = L-xylulose 5-phosphate + CO2. The protein operates within cofactor degradation; L-ascorbate degradation; D-xylulose 5-phosphate from L-ascorbate: step 2/4. Functionally, catalyzes the decarboxylation of 3-keto-L-gulonate-6-P into L-xylulose-5-P. Is involved in the anaerobic L-ascorbate utilization. The sequence is that of 3-keto-L-gulonate-6-phosphate decarboxylase UlaD from Salmonella choleraesuis (strain SC-B67).